A 143-amino-acid polypeptide reads, in one-letter code: Large ribosomal subunit protein uL16 (143 aa).

A disordered region spans residues 1–26 (MSMALLPRRVKYRKSQRGSRKGNATR). Basic residues predominate over residues 8–20 (RRVKYRKSQRGSR).

It belongs to the universal ribosomal protein uL16 family. Part of the 50S ribosomal subunit.

Functionally, binds 23S rRNA and is also seen to make contacts with the A and possibly P site tRNAs. The chain is Large ribosomal subunit protein uL16 from Methylacidiphilum infernorum (isolate V4) (Methylokorus infernorum (strain V4)).